The chain runs to 1331 residues: Sodium-dependent transporter bedraggled (1331 aa).

Positions 1–62 (MSSKEQQAAG…QLEHEQFGLS (62 aa)) are disordered. A compositionally biased stretch (polar residues) spans 16–25 (NSNAYSSLPP). The segment covering 28–43 (TGAGCSGAALGSGTGT) has biased composition (gly residues). Asn168 carries N-linked (GlcNAc...) asparagine glycosylation. Disordered regions lie at residues 221–284 (EPRT…TEPV) and 363–473 (QTNA…SASS). Residues 258–282 (KTFSCSLRPTSQIASSSGSLETSTE) are compositionally biased toward polar residues. Over residues 369-383 (SSEEPRPRQYGRRLE) the composition is skewed to basic and acidic residues. Positions 413-436 (LQDTPTHPIMSTCSELSSARSSRM) are enriched in polar residues. The segment covering 437-453 (PSPVSLPSDSSSSGSSS) has biased composition (low complexity). A compositionally biased stretch (polar residues) spans 463–473 (VQTTTMCSASS). 3 consecutive transmembrane segments (helical) span residues 505-525 (LALI…VLTI), 531-551 (FLLQ…WLQM), and 567-587 (ISPI…FLAL). 2 N-linked (GlcNAc...) asparagine glycosylation sites follow: Asn627 and Asn631. 4 helical membrane passes run 667–687 (QLAF…CKGL), 696–716 (IIYT…VYVV), 741–761 (TAAT…VIAI), and 778–798 (AILL…LALC). Asn857 is a glycosylation site (N-linked (GlcNAc...) asparagine). The chain crosses the membrane as a helical span at residues 890–910 (WVWAAVAFATFAGFGLAQLCV). Asn921 carries N-linked (GlcNAc...) asparagine glycosylation. The next 4 helical transmembrane spans lie at 926-946 (VLLS…EMGI), 956-976 (LGGS…VFLI), 998-1018 (AFLA…LSVV), and 1044-1064 (MGSL…IIQI). 3 disordered regions span residues 1086–1136 (PEEG…SYTT), 1169–1238 (SLDA…ASTL), and 1256–1275 (VRHR…TLPR). Composition is skewed to polar residues over residues 1097 to 1115 (ARQT…TTEG) and 1186 to 1196 (ILTNPAGSSFN). Positions 1197 to 1209 (ADPSPASSSSPES) are enriched in low complexity.

It belongs to the sodium:neurotransmitter symporter (SNF) (TC 2.A.22) family.

It localises to the membrane. Putative sodium-dependent transporter which is required for viability, early imaginal disk development and adult motor coordination. Also has a role in the fate commitment of the R3/R4 photoreceptor cells. May function in ommatidial polarity by regulating the activity of the core polarity genes, acting upstream of (or in parallel to) Vang, dsh, pk, stan, and dgo, but downstream or independently of fz. The protein is Sodium-dependent transporter bedraggled of Drosophila melanogaster (Fruit fly).